We begin with the raw amino-acid sequence, 476 residues long: Aspartyl/glutamyl-tRNA(Asn/Gln) amidotransferase subunit B (476 aa).

The protein belongs to the GatB/GatE family. GatB subfamily. In terms of assembly, heterotrimer of A, B and C subunits.

The enzyme catalyses L-glutamyl-tRNA(Gln) + L-glutamine + ATP + H2O = L-glutaminyl-tRNA(Gln) + L-glutamate + ADP + phosphate + H(+). The catalysed reaction is L-aspartyl-tRNA(Asn) + L-glutamine + ATP + H2O = L-asparaginyl-tRNA(Asn) + L-glutamate + ADP + phosphate + 2 H(+). Its function is as follows. Allows the formation of correctly charged Asn-tRNA(Asn) or Gln-tRNA(Gln) through the transamidation of misacylated Asp-tRNA(Asn) or Glu-tRNA(Gln) in organisms which lack either or both of asparaginyl-tRNA or glutaminyl-tRNA synthetases. The reaction takes place in the presence of glutamine and ATP through an activated phospho-Asp-tRNA(Asn) or phospho-Glu-tRNA(Gln). This is Aspartyl/glutamyl-tRNA(Asn/Gln) amidotransferase subunit B from Neisseria meningitidis serogroup C (strain 053442).